Here is a 161-residue protein sequence, read N- to C-terminus: Endoribonuclease YbeY (161 aa).

Positions 121, 125, and 131 each coordinate Zn(2+).

This sequence belongs to the endoribonuclease YbeY family. The cofactor is Zn(2+).

Its subcellular location is the cytoplasm. Its function is as follows. Single strand-specific metallo-endoribonuclease involved in late-stage 70S ribosome quality control and in maturation of the 3' terminus of the 16S rRNA. In Stenotrophomonas maltophilia (strain K279a), this protein is Endoribonuclease YbeY.